Consider the following 73-residue polypeptide: Large ribosomal subunit protein bL31 (73 aa).

This sequence belongs to the bacterial ribosomal protein bL31 family. Type A subfamily. As to quaternary structure, part of the 50S ribosomal subunit.

In terms of biological role, binds the 23S rRNA. The sequence is that of Large ribosomal subunit protein bL31 from Rhizobium meliloti (strain 1021) (Ensifer meliloti).